A 938-amino-acid polypeptide reads, in one-letter code: Isoleucine--tRNA ligase (938 aa).

A 'HIGH' region motif is present at residues 58–68 (PYANGSIHIGH). Glu561 serves as a coordination point for L-isoleucyl-5'-AMP. A 'KMSKS' region motif is present at residues 602–606 (KMSKS). Residue Lys605 participates in ATP binding. Residues Cys901, Cys904, Cys921, and Cys924 each contribute to the Zn(2+) site.

It belongs to the class-I aminoacyl-tRNA synthetase family. IleS type 1 subfamily. Monomer. Zn(2+) is required as a cofactor.

Its subcellular location is the cytoplasm. The enzyme catalyses tRNA(Ile) + L-isoleucine + ATP = L-isoleucyl-tRNA(Ile) + AMP + diphosphate. Functionally, catalyzes the attachment of isoleucine to tRNA(Ile). As IleRS can inadvertently accommodate and process structurally similar amino acids such as valine, to avoid such errors it has two additional distinct tRNA(Ile)-dependent editing activities. One activity is designated as 'pretransfer' editing and involves the hydrolysis of activated Val-AMP. The other activity is designated 'posttransfer' editing and involves deacylation of mischarged Val-tRNA(Ile). In Cronobacter sakazakii (strain ATCC BAA-894) (Enterobacter sakazakii), this protein is Isoleucine--tRNA ligase.